We begin with the raw amino-acid sequence, 66 residues long: Beta-mammal toxin Cv1 (66 aa).

Residues 1–66 (KEGYIVNLST…VWPLPKKTCN (66 aa)) enclose the LCN-type CS-alpha/beta domain. Cystine bridges form between Cys-12-Cys-65, Cys-16-Cys-41, Cys-25-Cys-46, and Cys-29-Cys-48.

Expressed by the venom gland.

It is found in the secreted. Its activity is regulated as follows. Is susceptible to be neutralized by human antibodies scFvs 10FG2 and HV. Its function is as follows. Beta toxins bind voltage-independently at site-4 of sodium channels (Nav) and reduces peak current and shifts the voltage of activation toward more negative potentials thereby affecting sodium channel activation and promoting spontaneous and repetitive firing. This toxin is slightly toxic to mice. The polypeptide is Beta-mammal toxin Cv1 (Centruroides villegasi (Scorpion)).